Consider the following 440-residue polypeptide: Ribulose bisphosphate carboxylase large chain (440 aa).

An N6,N6,N6-trimethyllysine modification is found at Lys4. Substrate contacts are provided by Asn113 and Thr163. The active-site Proton acceptor is Lys165. Lys167 contacts substrate. Lys191, Asp193, and Glu194 together coordinate Mg(2+). Lys191 carries the N6-carboxylysine modification. Catalysis depends on His284, which acts as the Proton acceptor. Substrate is bound by residues Arg285, His317, and Ser369.

This sequence belongs to the RuBisCO large chain family. Type I subfamily. As to quaternary structure, heterohexadecamer of 8 large chains and 8 small chains; disulfide-linked. The disulfide link is formed within the large subunit homodimers. It depends on Mg(2+) as a cofactor. In terms of processing, the disulfide bond which can form in the large chain dimeric partners within the hexadecamer appears to be associated with oxidative stress and protein turnover.

It is found in the plastid. It localises to the chloroplast. It carries out the reaction 2 (2R)-3-phosphoglycerate + 2 H(+) = D-ribulose 1,5-bisphosphate + CO2 + H2O. The enzyme catalyses D-ribulose 1,5-bisphosphate + O2 = 2-phosphoglycolate + (2R)-3-phosphoglycerate + 2 H(+). Functionally, ruBisCO catalyzes two reactions: the carboxylation of D-ribulose 1,5-bisphosphate, the primary event in carbon dioxide fixation, as well as the oxidative fragmentation of the pentose substrate in the photorespiration process. Both reactions occur simultaneously and in competition at the same active site. The sequence is that of Ribulose bisphosphate carboxylase large chain from Ptychomitrium gardneri (Gardner's ptychomitrium moss).